The following is a 671-amino-acid chain: K(+)-insensitive pyrophosphate-energized proton pump (671 aa).

Helical transmembrane passes span 3 to 23, 57 to 77, 79 to 99, 128 to 148, and 156 to 176; these read SLIF…AFFA, TIAV…DDGL, IAIG…IGMS, AVTG…FYIL, and VGFG…GGIF. Residue Lys178 participates in substrate binding. Mg(2+) contacts are provided by Asp181, Asp185, Asn208, and Asp211. Transmembrane regions (helical) follow at residues 223–243, 249–269, 285–305, 310–330, 366–386, and 391–411; these read LFET…LIIG, ILYP…SVFF, GVGG…NSLM, LFYA…ITEY, LVPT…VGGA, and IGLY…GMIV. Mg(2+) is bound at residue Asp421. The next 4 membrane-spanning stretches (helical) occupy residues 452–472, 490–510, 558–578, and 580–600; these read AVTK…LFAD, VVLA…AVTM, MAMP…ILGP, and ALAG…LMMD. The Ca(2+) site is built by Asp607, Asp633, and Asp637. A substrate-binding site is contributed by Lys640. The helical transmembrane segment at 646–666 threads the bilayer; the sequence is ALNALIKVVNMVAILFSSLII.

This sequence belongs to the H(+)-translocating pyrophosphatase (TC 3.A.10) family. K(+)-insensitive subfamily. As to quaternary structure, homodimer. Requires Mg(2+) as cofactor.

It localises to the cell membrane. It carries out the reaction diphosphate + H2O + H(+)(in) = 2 phosphate + 2 H(+)(out). In terms of biological role, proton pump that utilizes the energy of pyrophosphate hydrolysis as the driving force for proton movement across the membrane. Generates a proton motive force. The polypeptide is K(+)-insensitive pyrophosphate-energized proton pump (Methanosarcina acetivorans (strain ATCC 35395 / DSM 2834 / JCM 12185 / C2A)).